Consider the following 858-residue polypeptide: MSASVAEPPPALSRKAEFKAAKAELLARFKSANHVTPLMHALSRATDDALRSLWQECGLPATLALVAVGGFGRGELSPHSDVDILVLLPDAHASELDERIERFIGMAWDLGLEIGSSVRTVDQCIEEASHDVTVQTSLLEARRIVGSTALFERFMLRYREALDARAFFQAKVLEMRQRHAKFQDTPYSLEPNVKESPGGLRDLQTILWIARAAGFGSSWRELDTRGLITDREARELRRNEGFLKTLRARLHVIAGRRQDILVFDLQTQAAESFGYQPTSAKRASEQLMRRYYWAAKAVTQLATILIQNIEAQLFPATSGVTRVLSPGRFVEKQGMLEIAADDVFERHPDAILEAFLLYEATRGVKGLSARTLRALYNSRDVMNNAWRRDPRNRRTFMQILQQPEGITHAFRLMNQTSVLGRYLLNFRRIVGQMQHDLYHVYTVDQHILMVLRNIRRFAVAEHAHEYPFCSQLIVNFERPWVLYVAALFHDIAKGRGGDHSALGMADARRFCREHGIEGDDAALVVWLVQHHLTMSQVAQKQDTSDPVVIKRFAELVGSERRLTALYLLTVADIRGTSPKVWNTWKGKLLEDLYRATLAVLGGAQPDAHSELKTRQEEALALLRLETVPPDAHRALWDQLDVGYFLRHDAADIAWQTRVLYRHVAADTAIVRARPSPVGDALQVLVYVKDRSDLFAGICAYFDRNGLSVLDARVNTTRHGYALDNFIVTQTEHDVQYRDIANLVEQQLAARLAESAPLPEPSKGRLSRLSRTFPITPRVDLRADERGQYYILSVSANDRPGLLYSIARVLAEHRVGVHAARINTLGERVEDVFMLDGTGLSDNRLQIQVETELLRAIAV.

Residues 1–324 form a uridylyltransferase region; that stretch reads MSASVAEPPP…PATSGVTRVL (324 aa). A uridylyl-removing region spans residues 325–681; that stretch reads SPGRFVEKQG…ARPSPVGDAL (357 aa). Positions 443-565 constitute an HD domain; it reads VDQHILMVLR…VGSERRLTAL (123 aa). 2 consecutive ACT domains span residues 682-761 and 790-858; these read QVLV…PEPS and ILSV…AIAV.

Belongs to the GlnD family. The cofactor is Mg(2+).

It catalyses the reaction [protein-PII]-L-tyrosine + UTP = [protein-PII]-uridylyl-L-tyrosine + diphosphate. The catalysed reaction is [protein-PII]-uridylyl-L-tyrosine + H2O = [protein-PII]-L-tyrosine + UMP + H(+). Uridylyltransferase (UTase) activity is inhibited by glutamine, while glutamine activates uridylyl-removing (UR) activity. In terms of biological role, modifies, by uridylylation and deuridylylation, the PII regulatory proteins (GlnB and homologs), in response to the nitrogen status of the cell that GlnD senses through the glutamine level. Under low glutamine levels, catalyzes the conversion of the PII proteins and UTP to PII-UMP and PPi, while under higher glutamine levels, GlnD hydrolyzes PII-UMP to PII and UMP (deuridylylation). Thus, controls uridylylation state and activity of the PII proteins, and plays an important role in the regulation of nitrogen assimilation and metabolism. The polypeptide is Bifunctional uridylyltransferase/uridylyl-removing enzyme (Burkholderia pseudomallei (strain 1106a)).